Reading from the N-terminus, the 244-residue chain is Glutathione-independent glyoxalase hsp3101 (244 aa).

Active-site residues include C139, H140, and E173.

The protein belongs to the peptidase C56 family. HSP31-like subfamily.

The protein resides in the cytoplasm. The protein localises to the nucleus. It carries out the reaction methylglyoxal + H2O = (R)-lactate + H(+). Catalyzes the conversion of methylglyoxal (MG) to D-lactate in a single glutathione (GSH)-independent step. May play a role in detoxifying endogenously produced glyoxals. Involved in protection against reactive oxygen species (ROS). This is Glutathione-independent glyoxalase hsp3101 from Schizosaccharomyces pombe (strain 972 / ATCC 24843) (Fission yeast).